Consider the following 368-residue polypeptide: Glutaminyl-peptide cyclotransferase (368 aa).

An N-terminal signal peptide occupies residues 1–23 (MARERRDSKAATFFCLAWALCLA). N-linked (GlcNAc...) asparagine glycosylation is found at N53 and N65. C143 and C169 are joined by a disulfide. Position 164 (D164) interacts with Zn(2+). E207 (proton acceptor) is an active-site residue. E208 is a binding site for Zn(2+). Catalysis depends on D254, which acts as the Proton acceptor. N292 is a glycosylation site (N-linked (GlcNAc...) asparagine). H336 contacts Zn(2+). An N-linked (GlcNAc...) asparagine glycan is attached at N352.

Belongs to the glutaminyl-peptide cyclotransferase family. In terms of tissue distribution, expressed by the venom gland.

It localises to the secreted. It catalyses the reaction N-terminal L-glutaminyl-[peptide] = N-terminal 5-oxo-L-prolyl-[peptide] + NH4(+). In terms of biological role, responsible for the biosynthesis of pyroglutamyl peptides. Has a bias against acidic and tryptophan residues adjacent to the N-terminal glutaminyl residue and a lack of importance of chain length after the second residue. Also catalyzes N-terminal pyroglutamate formation. The chain is Glutaminyl-peptide cyclotransferase (QPCT) from Bothrops jararaca (Jararaca).